Here is a 137-residue protein sequence, read N- to C-terminus: NADPH-dependent 7-cyano-7-deazaguanine reductase (137 aa).

The active-site Thioimide intermediate is the cysteine 50. Aspartate 57 serves as the catalytic Proton donor. Substrate is bound by residues 72 to 74 (VEL) and 91 to 92 (HE).

It belongs to the GTP cyclohydrolase I family. QueF type 1 subfamily.

It is found in the cytoplasm. The catalysed reaction is 7-aminomethyl-7-carbaguanine + 2 NADP(+) = 7-cyano-7-deazaguanine + 2 NADPH + 3 H(+). It functions in the pathway tRNA modification; tRNA-queuosine biosynthesis. Its function is as follows. Catalyzes the NADPH-dependent reduction of 7-cyano-7-deazaguanine (preQ0) to 7-aminomethyl-7-deazaguanine (preQ1). The protein is NADPH-dependent 7-cyano-7-deazaguanine reductase of Synechocystis sp. (strain ATCC 27184 / PCC 6803 / Kazusa).